Here is a 276-residue protein sequence, read N- to C-terminus: NAD kinase (276 aa).

The Proton acceptor role is filled by D61. Residues 61–62, 134–135, R145, K162, D164, V172, 175–180, and Q234 contribute to the NAD(+) site; these read DG, ND, and TAYSFS.

This sequence belongs to the NAD kinase family. The cofactor is a divalent metal cation.

It is found in the cytoplasm. It carries out the reaction NAD(+) + ATP = ADP + NADP(+) + H(+). Functionally, involved in the regulation of the intracellular balance of NAD and NADP, and is a key enzyme in the biosynthesis of NADP. Catalyzes specifically the phosphorylation on 2'-hydroxyl of the adenosine moiety of NAD to yield NADP. This is NAD kinase from Clostridium perfringens (strain 13 / Type A).